We begin with the raw amino-acid sequence, 663 residues long: Translation factor GUF1, mitochondrial (663 aa).

Residues 1–44 (MRGCLQSVRWLTTALRRPAPQLSCLPFQPFASTSRLFSSCASRA) constitute a mitochondrion transit peptide. One can recognise a tr-type G domain in the interval 65–245 (ERFRNFCIVA…TIVEQIPAPV (181 aa)). Residues 74–81 (AHVDHGKS), 138–142 (DTPGH), and 192–195 (NKVD) each bind GTP.

This sequence belongs to the TRAFAC class translation factor GTPase superfamily. Classic translation factor GTPase family. LepA subfamily.

It is found in the mitochondrion inner membrane. The enzyme catalyses GTP + H2O = GDP + phosphate + H(+). Functionally, promotes mitochondrial protein synthesis. May act as a fidelity factor of the translation reaction, by catalyzing a one-codon backward translocation of tRNAs on improperly translocated ribosomes. Binds to mitochondrial ribosomes in a GTP-dependent manner. In Coccidioides posadasii (strain C735) (Valley fever fungus), this protein is Translation factor GUF1, mitochondrial.